Here is a 174-residue protein sequence, read N- to C-terminus: Large ribosomal subunit protein uL18 (174 aa).

This sequence belongs to the universal ribosomal protein uL18 family. Part of the 50S ribosomal subunit. Contacts the 5S and 23S rRNAs.

In terms of biological role, this is one of the proteins that bind and probably mediate the attachment of the 5S RNA into the large ribosomal subunit, where it forms part of the central protuberance. This chain is Large ribosomal subunit protein uL18, found in Methanosarcina barkeri (strain Fusaro / DSM 804).